The following is a 222-amino-acid chain: Germin-like protein subfamily 1 member 5 (222 aa).

Positions 1–24 (MKGLLHFLLAKIILLALASSFVYC) are cleaved as a signal peptide. The cysteines at positions 34 and 50 are disulfide-linked. Residues Asn38 and Asn71 are each glycosylated (N-linked (GlcNAc...) asparagine). A Cupin type-1 domain is found at 64–215 (SGLNVPGNTS…AFALDFNKVK (152 aa)). 3 residues coordinate Mn(2+): His112, His114, and Glu119. Residue Asn139 is glycosylated (N-linked (GlcNAc...) asparagine). His163 is a Mn(2+) binding site.

This sequence belongs to the germin family. In terms of assembly, oligomer (believed to be a pentamer but probably hexamer).

Its subcellular location is the secreted. It is found in the extracellular space. The protein localises to the apoplast. May play a role in plant defense. Probably has no oxalate oxidase activity even if the active site is conserved. The sequence is that of Germin-like protein subfamily 1 member 5 from Arabidopsis thaliana (Mouse-ear cress).